Consider the following 266-residue polypeptide: MKAKKYYGQNFISDLNLINKIVDVLDQNKDQLIIEIGPGKGALTKELVKRFDKVVVIEIDQDMVEILKTKFNHSNLEIIQADVLEIDLKQLISKYDYKNISIISNTPYYITSEILFKTLQISDLLTKAVFMLQKEVALRICSNKNENNYNNLSIACQFYSQRNFEFVVNKKMFYPIPKVDSAIISLTFNNIYKKQINDDKKFIEFVRTLFNNKRKTILNNLNNIIQNKNKALEYLKMLNISSNLRPEQLDIDEYIKLFNLIYISNF.

S-adenosyl-L-methionine is bound by residues asparagine 10, isoleucine 12, glycine 37, glutamate 58, aspartate 82, and asparagine 105.

Belongs to the class I-like SAM-binding methyltransferase superfamily. rRNA adenine N(6)-methyltransferase family. RsmA subfamily.

It is found in the cytoplasm. It catalyses the reaction adenosine(1518)/adenosine(1519) in 16S rRNA + 4 S-adenosyl-L-methionine = N(6)-dimethyladenosine(1518)/N(6)-dimethyladenosine(1519) in 16S rRNA + 4 S-adenosyl-L-homocysteine + 4 H(+). Its function is as follows. Specifically dimethylates two adjacent adenosines (A1518 and A1519) in the loop of a conserved hairpin near the 3'-end of 16S rRNA in the 30S particle. May play a critical role in biogenesis of 30S subunits. The chain is Ribosomal RNA small subunit methyltransferase A from Mycoplasma capricolum subsp. capricolum (strain California kid / ATCC 27343 / NCTC 10154).